A 332-amino-acid polypeptide reads, in one-letter code: Ribosomal RNA small subunit methyltransferase C (332 aa).

The protein belongs to the methyltransferase superfamily. RsmC family. As to quaternary structure, monomer.

It is found in the cytoplasm. It catalyses the reaction guanosine(1207) in 16S rRNA + S-adenosyl-L-methionine = N(2)-methylguanosine(1207) in 16S rRNA + S-adenosyl-L-homocysteine + H(+). Its function is as follows. Specifically methylates the guanine in position 1207 of 16S rRNA in the 30S particle. The protein is Ribosomal RNA small subunit methyltransferase C of Pseudomonas syringae pv. syringae (strain B728a).